Consider the following 255-residue polypeptide: Acetylglutamate kinase (255 aa).

Residues 40-41 (GG), Arg-62, and Asn-153 each bind substrate.

This sequence belongs to the acetylglutamate kinase family. ArgB subfamily.

Its subcellular location is the cytoplasm. The enzyme catalyses N-acetyl-L-glutamate + ATP = N-acetyl-L-glutamyl 5-phosphate + ADP. It participates in amino-acid biosynthesis; L-arginine biosynthesis; N(2)-acetyl-L-ornithine from L-glutamate: step 2/4. Its function is as follows. Catalyzes the ATP-dependent phosphorylation of N-acetyl-L-glutamate. This is Acetylglutamate kinase from Bacillus thuringiensis subsp. konkukian (strain 97-27).